Here is a 586-residue protein sequence, read N- to C-terminus: 2-succinyl-5-enolpyruvyl-6-hydroxy-3-cyclohexene-1-carboxylate synthase (586 aa).

The protein belongs to the TPP enzyme family. MenD subfamily. As to quaternary structure, homodimer. Mg(2+) is required as a cofactor. The cofactor is Mn(2+). Requires thiamine diphosphate as cofactor.

It catalyses the reaction isochorismate + 2-oxoglutarate + H(+) = 5-enolpyruvoyl-6-hydroxy-2-succinyl-cyclohex-3-ene-1-carboxylate + CO2. Its pathway is quinol/quinone metabolism; 1,4-dihydroxy-2-naphthoate biosynthesis; 1,4-dihydroxy-2-naphthoate from chorismate: step 2/7. The protein operates within quinol/quinone metabolism; menaquinone biosynthesis. Functionally, catalyzes the thiamine diphosphate-dependent decarboxylation of 2-oxoglutarate and the subsequent addition of the resulting succinic semialdehyde-thiamine pyrophosphate anion to isochorismate to yield 2-succinyl-5-enolpyruvyl-6-hydroxy-3-cyclohexene-1-carboxylate (SEPHCHC). This chain is 2-succinyl-5-enolpyruvyl-6-hydroxy-3-cyclohexene-1-carboxylate synthase, found in Natronomonas pharaonis (strain ATCC 35678 / DSM 2160 / CIP 103997 / JCM 8858 / NBRC 14720 / NCIMB 2260 / Gabara) (Halobacterium pharaonis).